We begin with the raw amino-acid sequence, 200 residues long: Holliday junction branch migration complex subunit RuvA (200 aa).

Residues 1 to 64 (MYAYFRGRVV…EDALQLYGFS (64 aa)) form a domain I region. The domain II stretch occupies residues 65–143 (SEEEKQLFRL…KLSPPGAAAT (79 aa)). The interval 144-154 (PAGAVQCGIRE) is flexible linker. The domain III stretch occupies residues 154 to 200 (EDATNALLTLGFSRTAAQQAVAGVLEANPGGSVEDVVKSALLAMHNR).

The protein belongs to the RuvA family. Homotetramer. Forms an RuvA(8)-RuvB(12)-Holliday junction (HJ) complex. HJ DNA is sandwiched between 2 RuvA tetramers; dsDNA enters through RuvA and exits via RuvB. An RuvB hexamer assembles on each DNA strand where it exits the tetramer. Each RuvB hexamer is contacted by two RuvA subunits (via domain III) on 2 adjacent RuvB subunits; this complex drives branch migration. In the full resolvosome a probable DNA-RuvA(4)-RuvB(12)-RuvC(2) complex forms which resolves the HJ.

It localises to the cytoplasm. In terms of biological role, the RuvA-RuvB-RuvC complex processes Holliday junction (HJ) DNA during genetic recombination and DNA repair, while the RuvA-RuvB complex plays an important role in the rescue of blocked DNA replication forks via replication fork reversal (RFR). RuvA specifically binds to HJ cruciform DNA, conferring on it an open structure. The RuvB hexamer acts as an ATP-dependent pump, pulling dsDNA into and through the RuvAB complex. HJ branch migration allows RuvC to scan DNA until it finds its consensus sequence, where it cleaves and resolves the cruciform DNA. This Chlorobium luteolum (strain DSM 273 / BCRC 81028 / 2530) (Pelodictyon luteolum) protein is Holliday junction branch migration complex subunit RuvA.